The following is a 244-amino-acid chain: Type III pantothenate kinase (244 aa).

7–14 (DIGNTRLK) contributes to the ATP binding site. Residues tyrosine 95 and 102–105 (GIDR) contribute to the substrate site. The active-site Proton acceptor is aspartate 104. Threonine 126 serves as a coordination point for ATP. Residue threonine 177 participates in substrate binding.

It belongs to the type III pantothenate kinase family. In terms of assembly, homodimer. NH4(+) serves as cofactor. Requires K(+) as cofactor.

The protein localises to the cytoplasm. It carries out the reaction (R)-pantothenate + ATP = (R)-4'-phosphopantothenate + ADP + H(+). Its pathway is cofactor biosynthesis; coenzyme A biosynthesis; CoA from (R)-pantothenate: step 1/5. Functionally, catalyzes the phosphorylation of pantothenate (Pan), the first step in CoA biosynthesis. The sequence is that of Type III pantothenate kinase from Acinetobacter baumannii (strain ACICU).